A 179-amino-acid chain; its full sequence is Inosine/xanthosine triphosphatase (179 aa).

Position 71 (Glu-71) interacts with Mg(2+). Position 71–72 (71–72 (EA)) interacts with substrate.

It belongs to the YjjX NTPase family. Homodimer. Requires Mg(2+) as cofactor. It depends on Mn(2+) as a cofactor.

The enzyme catalyses XTP + H2O = XDP + phosphate + H(+). It carries out the reaction ITP + H2O = IDP + phosphate + H(+). In terms of biological role, phosphatase that hydrolyzes non-canonical purine nucleotides such as XTP and ITP to their respective diphosphate derivatives. Probably excludes non-canonical purines from DNA/RNA precursor pool, thus preventing their incorporation into DNA/RNA and avoiding chromosomal lesions. The sequence is that of Inosine/xanthosine triphosphatase from Shewanella sp. (strain ANA-3).